Reading from the N-terminus, the 377-residue chain is Protein RecA (377 aa).

ATP is bound at residue 65–72 (GPESSGKT). The disordered stretch occupies residues 329 to 377 (GDEEAAATKATETKTDAPKDKDKGKTKAKDKPADVTPGQIELAPDKSAK). Over residues 339–361 (TETKTDAPKDKDKGKTKAKDKPA) the composition is skewed to basic and acidic residues.

Belongs to the RecA family.

It is found in the cytoplasm. Can catalyze the hydrolysis of ATP in the presence of single-stranded DNA, the ATP-dependent uptake of single-stranded DNA by duplex DNA, and the ATP-dependent hybridization of homologous single-stranded DNAs. It interacts with LexA causing its activation and leading to its autocatalytic cleavage. This chain is Protein RecA, found in Levilactobacillus brevis (strain ATCC 367 / BCRC 12310 / CIP 105137 / JCM 1170 / LMG 11437 / NCIMB 947 / NCTC 947) (Lactobacillus brevis).